The chain runs to 65 residues: Large ribosomal subunit protein uL29 (65 aa).

The protein belongs to the universal ribosomal protein uL29 family.

The polypeptide is Large ribosomal subunit protein uL29 (Psychrobacter arcticus (strain DSM 17307 / VKM B-2377 / 273-4)).